Here is a 321-residue protein sequence, read N- to C-terminus: Lipoyl synthase (321 aa).

[4Fe-4S] cluster contacts are provided by cysteine 68, cysteine 73, cysteine 79, cysteine 94, cysteine 98, cysteine 101, and serine 308. The Radical SAM core domain occupies 80–297; the sequence is FNHGTATFMI…KAEALAMGFT (218 aa).

This sequence belongs to the radical SAM superfamily. Lipoyl synthase family. The cofactor is [4Fe-4S] cluster.

The protein resides in the cytoplasm. It catalyses the reaction [[Fe-S] cluster scaffold protein carrying a second [4Fe-4S](2+) cluster] + N(6)-octanoyl-L-lysyl-[protein] + 2 oxidized [2Fe-2S]-[ferredoxin] + 2 S-adenosyl-L-methionine + 4 H(+) = [[Fe-S] cluster scaffold protein] + N(6)-[(R)-dihydrolipoyl]-L-lysyl-[protein] + 4 Fe(3+) + 2 hydrogen sulfide + 2 5'-deoxyadenosine + 2 L-methionine + 2 reduced [2Fe-2S]-[ferredoxin]. Its pathway is protein modification; protein lipoylation via endogenous pathway; protein N(6)-(lipoyl)lysine from octanoyl-[acyl-carrier-protein]: step 2/2. Its function is as follows. Catalyzes the radical-mediated insertion of two sulfur atoms into the C-6 and C-8 positions of the octanoyl moiety bound to the lipoyl domains of lipoate-dependent enzymes, thereby converting the octanoylated domains into lipoylated derivatives. The polypeptide is Lipoyl synthase (Escherichia coli O9:H4 (strain HS)).